Here is a 170-residue protein sequence, read N- to C-terminus: Urease accessory protein UreE (170 aa).

It belongs to the UreE family.

The protein resides in the cytoplasm. Its function is as follows. Involved in urease metallocenter assembly. Binds nickel. Probably functions as a nickel donor during metallocenter assembly. The protein is Urease accessory protein UreE of Helicobacter pylori (strain HPAG1).